The following is a 289-amino-acid chain: tRNA U34 carboxymethyltransferase (289 aa).

Carboxy-S-adenosyl-L-methionine contacts are provided by residues lysine 60, tryptophan 74, lysine 79, glycine 98, 120–122, 147–148, tyrosine 167, and arginine 282; these read DPS and VE.

This sequence belongs to the class I-like SAM-binding methyltransferase superfamily. CmoB family. Homotetramer.

It catalyses the reaction carboxy-S-adenosyl-L-methionine + 5-hydroxyuridine(34) in tRNA = 5-carboxymethoxyuridine(34) in tRNA + S-adenosyl-L-homocysteine + H(+). Its function is as follows. Catalyzes carboxymethyl transfer from carboxy-S-adenosyl-L-methionine (Cx-SAM) to 5-hydroxyuridine (ho5U) to form 5-carboxymethoxyuridine (cmo5U) at position 34 in tRNAs. This Campylobacter concisus (strain 13826) protein is tRNA U34 carboxymethyltransferase.